A 129-amino-acid polypeptide reads, in one-letter code: M-zodatoxin-Lt8g (129 aa).

The N-terminal stretch at 1–20 (MKYFVVALALVAAFACIAES) is a signal peptide. A propeptide spanning residues 21-60 (KPAESEHELAEVEEENELADLEDAVWLEHLADLSDLEEAR) is cleaved from the precursor. The Processing quadruplet motif signature appears at 57–60 (EEAR).

Cleavage of the propeptide depends on the processing quadruplet motif (XXXR, with at least one of X being E). As to expression, expressed by the venom gland.

It localises to the secreted. Functionally, insecticidal, cytolytic and antimicrobial peptide. Has insecticidal activity against the flesh fly S.carnaria. Has antibacterial activity against the Gram-negative bacteria E.coli. Forms voltage-dependent, ion-permeable channels in membranes. At high concentration causes cell membrane lysis. This Lachesana tarabaevi (Spider) protein is M-zodatoxin-Lt8g (cit 1-8).